A 357-amino-acid polypeptide reads, in one-letter code: Elongation factor Ts (357 aa).

Residues 82–85 (TDFV) form an involved in Mg(2+) ion dislocation from EF-Tu region.

The protein belongs to the EF-Ts family.

Its subcellular location is the cytoplasm. Associates with the EF-Tu.GDP complex and induces the exchange of GDP to GTP. It remains bound to the aminoacyl-tRNA.EF-Tu.GTP complex up to the GTP hydrolysis stage on the ribosome. The polypeptide is Elongation factor Ts (Campylobacter jejuni subsp. jejuni serotype O:2 (strain ATCC 700819 / NCTC 11168)).